We begin with the raw amino-acid sequence, 141 residues long: Hemoglobin subunit alpha (141 aa).

One can recognise a Globin domain in the interval 1 to 141 (VLSPADKTNV…VSTVLTSKYR (141 aa)). At serine 3 the chain carries Phosphoserine. Lysine 7 carries the N6-succinyllysine modification. At threonine 8 the chain carries Phosphothreonine. Position 11 is an N6-succinyllysine (lysine 11). At lysine 16 the chain carries N6-acetyllysine; alternate. Lysine 16 bears the N6-succinyllysine; alternate mark. A Phosphotyrosine modification is found at tyrosine 24. Lysine 40 is modified (N6-succinyllysine). Residue serine 49 is modified to Phosphoserine. An O2-binding site is contributed by histidine 58. Position 87 (histidine 87) interacts with heme b. A Phosphoserine modification is found at serine 102. Threonine 108 is subject to Phosphothreonine. Phosphoserine is present on serine 124. A phosphothreonine mark is found at threonine 134 and threonine 137. Serine 138 carries the post-translational modification Phosphoserine.

Belongs to the globin family. As to quaternary structure, heterotetramer of two alpha chains and two beta chains. In terms of tissue distribution, red blood cells.

Its function is as follows. Involved in oxygen transport from the lung to the various peripheral tissues. Functionally, hemopressin acts as an antagonist peptide of the cannabinoid receptor CNR1. Hemopressin-binding efficiently blocks cannabinoid receptor CNR1 and subsequent signaling. In Phoca vitulina (Harbor seal), this protein is Hemoglobin subunit alpha (HBA).